The primary structure comprises 474 residues: Protein nucleotidyltransferase YdiU (474 aa).

Positions 89, 91, 92, 112, 124, 125, 178, and 185 each coordinate ATP. Residue D262 is the Proton acceptor of the active site. The Mg(2+) site is built by N263 and D272. D272 lines the ATP pocket.

It belongs to the SELO family. Requires Mg(2+) as cofactor. Mn(2+) is required as a cofactor.

It carries out the reaction L-seryl-[protein] + ATP = 3-O-(5'-adenylyl)-L-seryl-[protein] + diphosphate. The enzyme catalyses L-threonyl-[protein] + ATP = 3-O-(5'-adenylyl)-L-threonyl-[protein] + diphosphate. The catalysed reaction is L-tyrosyl-[protein] + ATP = O-(5'-adenylyl)-L-tyrosyl-[protein] + diphosphate. It catalyses the reaction L-histidyl-[protein] + UTP = N(tele)-(5'-uridylyl)-L-histidyl-[protein] + diphosphate. It carries out the reaction L-seryl-[protein] + UTP = O-(5'-uridylyl)-L-seryl-[protein] + diphosphate. The enzyme catalyses L-tyrosyl-[protein] + UTP = O-(5'-uridylyl)-L-tyrosyl-[protein] + diphosphate. Nucleotidyltransferase involved in the post-translational modification of proteins. It can catalyze the addition of adenosine monophosphate (AMP) or uridine monophosphate (UMP) to a protein, resulting in modifications known as AMPylation and UMPylation. This chain is Protein nucleotidyltransferase YdiU, found in Trichodesmium erythraeum (strain IMS101).